The primary structure comprises 791 residues: RAS guanyl-releasing protein 1 (791 aa).

In terms of domain architecture, N-terminal Ras-GEF spans 49-172 (LGKLSKGASL…RLIDTAQINS (124 aa)). Residues 53–106 (SKGASLDDLIQMCIQAFDLDGNMGQNSELLQIMLTMHGFLLPSTELLMKLRTLY) form a ras exchanger motif region; required for transforming activity region. The region spanning 201-432 (EPQELAEHLT…YELSYAREPR (232 aa)) is the Ras-GEF domain. EF-hand domains lie at 466 to 501 (HVQRMVDSVFKNYDLDQDGYISQEEFEKIAASFPFS) and 502 to 528 (FCVMDKDREGLISRQEITAYFMRASSI). Ca(2+) is bound by residues aspartate 479, aspartate 481, aspartate 483, tyrosine 485, glutamate 490, aspartate 506, aspartate 508, glutamate 510, and glutamate 517. The Phorbol-ester/DAG-type zinc-finger motif lies at 537–587 (LHNFQETTYLRPTFCDNCAGFLWGVIKQGYRCKDCGMNCHKQCKELVVFEC). The span at 683-695 (QVPSPQRSRTPGL) shows a compositional bias: polar residues. Residues 683-715 (QVPSPQRSRTPGLTSHLPISPMPSPCPSPVPTR) form a disordered region. Positions 702 to 712 (SPMPSPCPSPV) are enriched in pro residues. The stretch at 728 to 785 (IRKARAELRGGKAGIQELEKEKALLKEENTTLKIQLKDAQRRVETLRAELRKYVLDSD) forms a coiled coil.

Belongs to the RASGRP family.

It is found in the cytoplasm. It localises to the cytosol. The protein resides in the cell membrane. The protein localises to the golgi apparatus membrane. Its subcellular location is the endoplasmic reticulum membrane. With respect to regulation, regulated by F-actin polymerization and probably by calcium. Its function is as follows. Functions as a diacylglycerol (DAG)-regulated nucleotide exchange factor specifically activating Ras through the exchange of bound GDP for GTP. The polypeptide is RAS guanyl-releasing protein 1 (rasgrp1) (Xenopus tropicalis (Western clawed frog)).